A 276-amino-acid polypeptide reads, in one-letter code: Large ribosomal subunit protein uL2 (276 aa).

Residues 223–276 (GSAMNPVDHPHGGGEGKAPIGHPGPLTPWGKPTLGYKTRKKNKPSDKFIVKRRK) form a disordered region. A compositionally biased stretch (basic and acidic residues) spans 265 to 276 (KPSDKFIVKRRK).

It belongs to the universal ribosomal protein uL2 family. As to quaternary structure, part of the 50S ribosomal subunit. Forms a bridge to the 30S subunit in the 70S ribosome.

In terms of biological role, one of the primary rRNA binding proteins. Required for association of the 30S and 50S subunits to form the 70S ribosome, for tRNA binding and peptide bond formation. It has been suggested to have peptidyltransferase activity; this is somewhat controversial. Makes several contacts with the 16S rRNA in the 70S ribosome. This is Large ribosomal subunit protein uL2 from Caldicellulosiruptor saccharolyticus (strain ATCC 43494 / DSM 8903 / Tp8T 6331).